Reading from the N-terminus, the 276-residue chain is Diaminopimelate epimerase (276 aa).

3 residues coordinate substrate: N13, Q46, and N66. C75 (proton donor) is an active-site residue. Residues 76–77 (GN), N159, N192, and 210–211 (ER) each bind substrate. The active-site Proton acceptor is C219. 220–221 (GS) is a binding site for substrate.

This sequence belongs to the diaminopimelate epimerase family. In terms of assembly, homodimer.

It localises to the cytoplasm. It catalyses the reaction (2S,6S)-2,6-diaminopimelate = meso-2,6-diaminopimelate. Its pathway is amino-acid biosynthesis; L-lysine biosynthesis via DAP pathway; DL-2,6-diaminopimelate from LL-2,6-diaminopimelate: step 1/1. Its function is as follows. Catalyzes the stereoinversion of LL-2,6-diaminopimelate (L,L-DAP) to meso-diaminopimelate (meso-DAP), a precursor of L-lysine and an essential component of the bacterial peptidoglycan. In Colwellia psychrerythraea (strain 34H / ATCC BAA-681) (Vibrio psychroerythus), this protein is Diaminopimelate epimerase.